Reading from the N-terminus, the 641-residue chain is Fructose-1,6-bisphosphatase class 3 (641 aa).

The protein belongs to the FBPase class 3 family. The cofactor is Mn(2+).

It catalyses the reaction beta-D-fructose 1,6-bisphosphate + H2O = beta-D-fructose 6-phosphate + phosphate. Its pathway is carbohydrate biosynthesis; gluconeogenesis. In Bacillus velezensis (strain DSM 23117 / BGSC 10A6 / LMG 26770 / FZB42) (Bacillus amyloliquefaciens subsp. plantarum), this protein is Fructose-1,6-bisphosphatase class 3.